An 846-amino-acid polypeptide reads, in one-letter code: MAP7 domain-containing protein 1 (846 aa).

Disordered stretches follow at residues 1 to 153 and 186 to 210; these read MESG…ERAK and EQRLKAEQRRAALEERQRQKLEKNK. The span at 24–41 shows a compositional bias: pro residues; that stretch reads EPRPSPEGDPSPPPPPTP. 2 positions are modified to phosphothreonine: threonine 49 and threonine 53. The residue at position 95 (serine 95) is a Phosphoserine. A Phosphothreonine modification is found at threonine 99. Positions 113–123 are enriched in low complexity; that stretch reads RSSQPSPTTVP. A phosphoserine mark is found at serine 115 and serine 118. Threonine 120 carries the phosphothreonine modification. Residues serine 125 and serine 127 each carry the phosphoserine modification. A coiled-coil region spans residues 130-224; that stretch reads AKQDVKKAGE…AAIQRSVKKT (95 aa). Residues 132-153 are compositionally biased toward basic and acidic residues; sequence QDVKKAGERHKLAKERREERAK. Phosphoserine occurs at positions 256, 275, 315, 368, and 401. Positions 318–816 are disordered; sequence TLPRNGRDQG…KGTAGDKSLG (499 aa). The span at 407–437 shows a compositional bias: basic and acidic residues; that stretch reads RRLEATPVQKKEKKDKERENEKEKSALARER. Positions 414–443 form a coiled coil; that stretch reads VQKKEKKDKERENEKEKSALARERNLKKRQ. Serine 444, serine 448, serine 454, and serine 460 each carry phosphoserine. The segment covering 460–471 has biased composition (low complexity); sequence SPKSKARPSSPS. A Glycyl lysine isopeptide (Lys-Gly) (interchain with G-Cter in SUMO2) cross-link involves residue lysine 462. Phosphoserine is present on residues serine 479 and serine 496. Positions 479–497 are enriched in pro residues; sequence SPCPSPGPGHALPPKPPSP. Over residues 523–539 the composition is skewed to basic and acidic residues; it reads PEDKNHRKSRAAEEKEP. Residues 542–556 are compositionally biased toward pro residues; that stretch reads PASPAPSPVPSPTPA. Phosphoserine occurs at positions 544, 548, and 552. A Phosphothreonine modification is found at threonine 554. The span at 568–579 shows a compositional bias: low complexity; that stretch reads PAETAVPAVPAA. Positions 599 to 740 form a coiled coil; that stretch reads TTDREEATRL…AETKKQDAKE (142 aa). The span at 600–740 shows a compositional bias: basic and acidic residues; that stretch reads TDREEATRLL…AETKKQDAKE (141 aa). Threonine 818 is modified (phosphothreonine).

The protein belongs to the MAP7 family.

It is found in the cytoplasm. It localises to the cytoskeleton. The protein localises to the spindle. The protein resides in the microtubule organizing center. Its subcellular location is the centrosome. It is found in the midbody. Microtubule-stabilizing protein involved in the control of cell motility and neurite outgrowth. Facilitate microtubule stabilization through the maintenance of acetylated stable microtubules. This chain is MAP7 domain-containing protein 1 (Map7d1), found in Mus musculus (Mouse).